We begin with the raw amino-acid sequence, 371 residues long: Alanine dehydrogenase (371 aa).

The substrate site is built by Arg15 and Lys75. Residue His96 is the Proton donor/acceptor of the active site. Residues Ser134, 178-179, Asp198, Ser220, 239-240, 267-270, Arg279, and 298-301 contribute to the NAD(+) site; these read TA, VL, IAID, and VANM. The active-site Proton donor/acceptor is Asp270.

The protein belongs to the AlaDH/PNT family. As to quaternary structure, homohexamer. Trimer of dimers.

The protein localises to the cytoplasm. It carries out the reaction L-alanine + NAD(+) + H2O = pyruvate + NH4(+) + NADH + H(+). The protein operates within amino-acid degradation; L-alanine degradation via dehydrogenase pathway; NH(3) and pyruvate from L-alanine: step 1/1. Its function is as follows. Catalyzes the reversible reductive amination of pyruvate to L-alanine. Required for proficient utilization of D- or L-alanine as a nitrogen source. May be required for the adaptation from aerobic growth to anaerobic dormancy. It could be involved in the maintenance of the NAD pool during the shift to an anaerobic dormant state in which oxygen as a terminal electron acceptor becomes limiting. The sequence is that of Alanine dehydrogenase from Mycolicibacterium smegmatis (strain ATCC 700084 / mc(2)155) (Mycobacterium smegmatis).